A 52-amino-acid chain; its full sequence is Ornatin-C (52 aa).

Residues 42–44 (RGD) carry the Cell attachment site motif.

The protein belongs to the ornatin family.

It is found in the secreted. In terms of biological role, potent inhibitor of fibrinogen interaction with platelet receptors expressed on glycoprotein IIb-IIIa complex. May prevent blood from clotting during either feeding and/or storage of ingested blood. This chain is Ornatin-C, found in Placobdella ornata (Turtle leech).